The chain runs to 310 residues: GPN-loop GTPase 2 (310 aa).

A2 carries the post-translational modification N-acetylalanine. 19–24 (GSGKTT) provides a ligand contact to GTP. Residues 76 to 78 (GPN) carry the Gly-Pro-Asn (GPN)-loop; involved in dimer interface motif. Position 178–181 (178–181 (SKMD)) interacts with GTP.

The protein belongs to the GPN-loop GTPase family. Heterodimers with GPN1 or GPN3. Binds to RNA polymerase II (RNAPII).

Its function is as follows. Small GTPase required for proper localization of RNA polymerase II and III (RNAPII and RNAPIII). May act at an RNAP assembly step prior to nuclear import. This chain is GPN-loop GTPase 2, found in Rattus norvegicus (Rat).